Consider the following 372-residue polypeptide: tRNA-specific 2-thiouridylase MnmA 1 (372 aa).

ATP-binding positions include 26–33 and Met52; that span reads AISGGVDS. The active-site Nucleophile is the Cys118. Cys118 and Cys214 form a disulfide bridge. Gly142 is an ATP binding site. The interval 164–166 is interaction with tRNA; sequence KDQ. Cys214 functions as the Cysteine persulfide intermediate in the catalytic mechanism.

It belongs to the MnmA/TRMU family.

Its subcellular location is the cytoplasm. It carries out the reaction S-sulfanyl-L-cysteinyl-[protein] + uridine(34) in tRNA + AH2 + ATP = 2-thiouridine(34) in tRNA + L-cysteinyl-[protein] + A + AMP + diphosphate + H(+). Its function is as follows. Catalyzes the 2-thiolation of uridine at the wobble position (U34) of tRNA, leading to the formation of s(2)U34. This chain is tRNA-specific 2-thiouridylase MnmA 1, found in Syntrophus aciditrophicus (strain SB).